The chain runs to 422 residues: Succinate--CoA ligase [ADP-forming] subunit beta, mitochondrial (422 aa).

The transit peptide at 1–27 (MVRGSLGKLASRALSVAGKWQHQQLRR) directs the protein to the mitochondrion. In terms of domain architecture, ATP-grasp spans 36-279 (AELMGKYGIN…TTQEDPREVA (244 aa)). ATP contacts are provided by residues K75, 82-84 (GRG), and E142. Mg(2+) is bound by residues N234 and D248. Residues N299 and 356–358 (GIM) each bind substrate.

It belongs to the succinate/malate CoA ligase beta subunit family. Heterodimer of an alpha and a beta subunit. It depends on Mg(2+) as a cofactor.

It localises to the mitochondrion. It catalyses the reaction succinate + ATP + CoA = succinyl-CoA + ADP + phosphate. The protein operates within carbohydrate metabolism; tricarboxylic acid cycle; succinate from succinyl-CoA (ligase route): step 1/1. Its function is as follows. Succinyl-CoA synthetase functions in the citric acid cycle (TCA), coupling the hydrolysis of succinyl-CoA to the synthesis of ATP and thus represents the only step of substrate-level phosphorylation in the TCA. The beta subunit provides nucleotide specificity of the enzyme and binds the substrate succinate, while the binding sites for coenzyme A and phosphate are found in the alpha subunit. The polypeptide is Succinate--CoA ligase [ADP-forming] subunit beta, mitochondrial (Oryza sativa subsp. japonica (Rice)).